A 233-amino-acid chain; its full sequence is tRNA (guanine-N(7)-)-methyltransferase (233 aa).

4 residues coordinate S-adenosyl-L-methionine: glutamate 62, glutamate 87, aspartate 116, and aspartate 138. Residue aspartate 138 is part of the active site. Substrate contacts are provided by residues lysine 142, aspartate 174, and 212–215 (TRYE).

The protein belongs to the class I-like SAM-binding methyltransferase superfamily. TrmB family.

It carries out the reaction guanosine(46) in tRNA + S-adenosyl-L-methionine = N(7)-methylguanosine(46) in tRNA + S-adenosyl-L-homocysteine. The protein operates within tRNA modification; N(7)-methylguanine-tRNA biosynthesis. Catalyzes the formation of N(7)-methylguanine at position 46 (m7G46) in tRNA. The polypeptide is tRNA (guanine-N(7)-)-methyltransferase (Bartonella quintana (strain Toulouse) (Rochalimaea quintana)).